The chain runs to 388 residues: Mannitol-1-phosphate 5-dehydrogenase (388 aa).

NAD(+) is bound at residue Ala5–Gly16. The active site involves Lys213.

This sequence belongs to the mannitol dehydrogenase family. As to quaternary structure, monomer.

The enzyme catalyses D-mannitol 1-phosphate + NAD(+) = beta-D-fructose 6-phosphate + NADH + H(+). Catalyzes the NAD(H)-dependent interconversion of D-fructose 6-phosphate and D-mannitol 1-phosphate in the mannitol metabolic pathway. In Aspergillus terreus (strain NIH 2624 / FGSC A1156), this protein is Mannitol-1-phosphate 5-dehydrogenase (mpdA).